A 545-amino-acid chain; its full sequence is Germacrene D synthase 1 (545 aa).

Mg(2+) is bound by residues Asp-298, Asp-302, Asn-443, and Glu-451. The short motif at 298 to 302 (DDTFD) is the DDXXD motif element.

Belongs to the terpene synthase family. Requires Mg(2+) as cofactor.

The protein localises to the cytoplasm. It is found in the cytosol. It catalyses the reaction (2E,6E)-farnesyl diphosphate = (-)-germacrene D + diphosphate. It functions in the pathway secondary metabolite biosynthesis; terpenoid biosynthesis. Functionally, sesquiterpene synthase involved in germacrene D biosynthesis. Also produces at least 13 additional sesquiterpene products, including germacrene C and (+)-germacrene A, beta-ylangene, (E)-beta-farnesene and (E,E)-alpha-farnesene. The sequence is that of Germacrene D synthase 1 from Pogostemon cablin (Patchouli).